The following is a 490-amino-acid chain: Pentatricopeptide repeat-containing protein At2g20710, mitochondrial (490 aa).

A mitochondrion-targeting transit peptide spans 1-86 (MKHLLLLRLV…IKMLRKFSRF (86 aa)). 8 PPR repeats span residues 138–172 (NYHLYGALLNCYASKKVLHKAEQVFQEMKELGFLK), 173–207 (GCLPYNVMLNLYVRTGKYTMVEKLLREMEDETVKP), 208–243 (DIFTVNTRLHAYSVVSDVEGMEKFLMRCEADQGLHL), 244–274 (DWRTYADTANGYIKAGLTEKALEMLRKSEQM), 280–310 (RKHAYEVLMSFYGAAGKKEEVYRLWSLYKEL), 314–344 (YNTGYISVISALLKMDDIEEVEKIMEEWEAG), 349–379 (DIRIPHLLITGYCKKGMMEKAEEVVNILVQK), and 384–421 (DTSTWERLALGYKMAGKMEKAVEKWKRAIEVSKPGWRP).

Belongs to the PPR family. P subfamily.

Its subcellular location is the mitochondrion. In Arabidopsis thaliana (Mouse-ear cress), this protein is Pentatricopeptide repeat-containing protein At2g20710, mitochondrial.